The primary structure comprises 286 residues: KH domain-containing protein At2g38610 (286 aa).

Ser2 is modified (N-acetylserine). The KH domain maps to Glu141–Leu208. Positions Ser256–Cys286 are disordered. Residues Ser263 and Ser273 each carry the phosphoserine modification.

It is found in the nucleus. The chain is KH domain-containing protein At2g38610 from Arabidopsis thaliana (Mouse-ear cress).